Reading from the N-terminus, the 225-residue chain is MRIVFDIGGSVLVPSKPDVEFIDKLSYELTKVSEDHEIAIVVGGGKTAREYIEVASKFNANETFKDYLGIQITRANAMLLIAALKERAYPQVVTDFWEAWKAIQLKKIPVMGGTHPGHTTDAVSALLAEFLGADLLVVITNVDGVYTDDPRKNPNAKKLEKISARELVQIVGKSTSKAGASTVIDPLAASIILRSGIKTYIIGKKDALRLFDVIRGKHEGTTVEP.

9-10 lines the ATP pocket; the sequence is GS. G44 is a binding site for UMP. ATP contacts are provided by G45 and R49. Residues D66 and 114 to 120 contribute to the UMP site; that span reads THPGHTT. The ATP site is built by T140, N141, Y146, and D149.

The protein belongs to the UMP kinase family. In terms of assembly, homohexamer.

It localises to the cytoplasm. It catalyses the reaction UMP + ATP = UDP + ADP. The protein operates within pyrimidine metabolism; CTP biosynthesis via de novo pathway; UDP from UMP (UMPK route): step 1/1. Inhibited by UTP. In terms of biological role, catalyzes the reversible phosphorylation of UMP to UDP. The protein is Uridylate kinase of Pyrococcus abyssi (strain GE5 / Orsay).